We begin with the raw amino-acid sequence, 442 residues long: Trigger factor (442 aa).

In terms of domain architecture, PPIase FKBP-type spans 165–250; the sequence is DDTAQIDFEG…LHKILQKELP (86 aa).

The protein belongs to the FKBP-type PPIase family. Tig subfamily.

Its subcellular location is the cytoplasm. The catalysed reaction is [protein]-peptidylproline (omega=180) = [protein]-peptidylproline (omega=0). Functionally, involved in protein export. Acts as a chaperone by maintaining the newly synthesized protein in an open conformation. Functions as a peptidyl-prolyl cis-trans isomerase. This chain is Trigger factor, found in Helicobacter hepaticus (strain ATCC 51449 / 3B1).